Reading from the N-terminus, the 392-residue chain is Sulfate adenylyltransferase (392 aa).

Belongs to the sulfate adenylyltransferase family.

The catalysed reaction is sulfate + ATP + H(+) = adenosine 5'-phosphosulfate + diphosphate. It functions in the pathway sulfur metabolism; hydrogen sulfide biosynthesis; sulfite from sulfate: step 1/3. The sequence is that of Sulfate adenylyltransferase from Trichormus variabilis (strain ATCC 29413 / PCC 7937) (Anabaena variabilis).